The following is a 206-amino-acid chain: MLVTIEGIDGSGKSTLHKALGPYLADLNPVITCEPGSTWIGEAVRRAIREHADPIAEALLFVADHAAHLREVVRPALSEDRLVISDRYIDSRLVYQQVTLDGIIPDPRTWLRAVHQGWTIMPDLTILLAVPVPVALERTGKRGSGEHFEQESVLTKVQEYYMQLVEEDTARFLILDGTLPPEHILKVAGEAIRFRFDEMNRKKKKS.

Residue 7-14 coordinates ATP; the sequence is GIDGSGKS.

Belongs to the thymidylate kinase family.

It carries out the reaction dTMP + ATP = dTDP + ADP. This is Probable thymidylate kinase from Methanospirillum hungatei JF-1 (strain ATCC 27890 / DSM 864 / NBRC 100397 / JF-1).